A 261-amino-acid polypeptide reads, in one-letter code: Small ribosomal subunit protein uS2 (261 aa).

It belongs to the universal ribosomal protein uS2 family.

The sequence is that of Small ribosomal subunit protein uS2 from Paracoccus denitrificans (strain Pd 1222).